Reading from the N-terminus, the 64-residue chain is DNA-binding protein 7a (64 aa).

This sequence belongs to the 7 kDa DNA-binding/endoribonuclease P2 family. Monomer.

It localises to the cytoplasm. Can constrain negative DNA supercoils. May be involved in maintaining the integrity of the genome at high temperature. In Saccharolobus islandicus (strain L.D.8.5 / Lassen #2) (Sulfolobus islandicus), this protein is DNA-binding protein 7a.